The chain runs to 104 residues: UPF0235 protein MTH_637 (104 aa).

This sequence belongs to the UPF0235 family.

In Methanothermobacter thermautotrophicus (strain ATCC 29096 / DSM 1053 / JCM 10044 / NBRC 100330 / Delta H) (Methanobacterium thermoautotrophicum), this protein is UPF0235 protein MTH_637.